The sequence spans 259 residues: MSDKLTIAGREFASRLIVGTGKYRSFQEMQRCHEASGADMVTVAVRRVNLTDRTKESLIDYIDRSKIFILPNTAGCYTADDAVRTAMLGREVGLSNWVKLEVIGDEKTLFPDNAGLLEATRILVKEGFAVLPYTNDDIVNARRLIEAGAAAVMPLAAPIGSGLGIQNPTNLRIFREMITEVPVIVDAGVGTASDAAIAMELGADGVLMNTAIAAAEDAVKMARAMKLGVECGRLAFESGRMAKKLYASASSPLTGVVGA.

The active-site Schiff-base intermediate with DXP is Lys99. 1-deoxy-D-xylulose 5-phosphate is bound by residues Gly160, 187–188 (AG), and 209–210 (NT).

This sequence belongs to the ThiG family. In terms of assembly, homotetramer. Forms heterodimers with either ThiH or ThiS.

The protein resides in the cytoplasm. It catalyses the reaction [ThiS sulfur-carrier protein]-C-terminal-Gly-aminoethanethioate + 2-iminoacetate + 1-deoxy-D-xylulose 5-phosphate = [ThiS sulfur-carrier protein]-C-terminal Gly-Gly + 2-[(2R,5Z)-2-carboxy-4-methylthiazol-5(2H)-ylidene]ethyl phosphate + 2 H2O + H(+). The protein operates within cofactor biosynthesis; thiamine diphosphate biosynthesis. In terms of biological role, catalyzes the rearrangement of 1-deoxy-D-xylulose 5-phosphate (DXP) to produce the thiazole phosphate moiety of thiamine. Sulfur is provided by the thiocarboxylate moiety of the carrier protein ThiS. In vitro, sulfur can be provided by H(2)S. In Solibacter usitatus (strain Ellin6076), this protein is Thiazole synthase.